We begin with the raw amino-acid sequence, 255 residues long: F-box only protein 44 (255 aa).

In terms of domain architecture, F-box spans 3–50 (VGNINELPENILLELFIHIPARQLLLRCRPVCSLWRDLIDLVTLWKRK). Positions 71 to 252 (FYFLRSLQRN…VTNSSITIGP (182 aa)) constitute an FBA domain.

As to quaternary structure, part of a SCF (SKP1-cullin-F-box) protein ligase complex. Interacts with SKP1 and CUL1. As to expression, expressed in brain, liver, pancreas and adipose tissue (at protein level). Widely expressed.

Its function is as follows. Substrate-recognition component of the SCF (SKP1-CUL1-F-box protein)-type E3 ubiquitin ligase complex. This Mus musculus (Mouse) protein is F-box only protein 44 (Fbxo44).